The primary structure comprises 288 residues: Cytochrome b-c1 complex catalytic subunit, mitochondrial (288 aa).

The chain crosses the membrane as a helical span at residues 12–34 (SMVQKFIAGGVGVTGLTASYLLY). A Cytochrome c domain is found at 69 to 222 (ASIRRGFQVY…DLVEYEDGTP (154 aa)). Heme c is bound by residues C82, C85, and H86. The segment covering 111–121 (EELEYDDEPDD) has biased composition (acidic residues). The segment at 111-138 (EELEYDDEPDDEGKPRKRPGKLADYIPG) is disordered. The helical transmembrane segment at 250-268 (WGLKALVVLSSLYLLSIWV) threads the bilayer.

This sequence belongs to the cytochrome c family. Component of the ubiquinol-cytochrome c oxidoreductase (cytochrome b-c1 complex, complex III, CIII), a multisubunit enzyme composed of 10 subunits. The complex is composed of 3 respiratory subunits cytochrome b (COB), cytochrome c1 (CYT1) and Rieske protein (RIP1), 2 core protein subunits COR1 and QCR2, and 5 low-molecular weight protein subunits QCR6, QCR7, QCR8, QCR9 and QCR10. The complex exists as an obligatory dimer and forms supercomplexes (SCs) in the inner mitochondrial membrane with a monomer or a dimer of cytochrome c oxidase (complex IV, CIV), resulting in 2 different assemblies (supercomplexes III(2)IV and III(2)IV(2)). Heme c is required as a cofactor.

It is found in the mitochondrion inner membrane. The catalysed reaction is a quinol + 2 Fe(III)-[cytochrome c](out) = a quinone + 2 Fe(II)-[cytochrome c](out) + 2 H(+)(out). Functionally, component of the ubiquinol-cytochrome c oxidoreductase, a multisubunit transmembrane complex that is part of the mitochondrial electron transport chain which drives oxidative phosphorylation. The complex plays an important role in the uptake of multiple carbon sources present in different host niches. The sequence is that of Cytochrome b-c1 complex catalytic subunit, mitochondrial from Candida albicans (strain SC5314 / ATCC MYA-2876) (Yeast).